Reading from the N-terminus, the 346-residue chain is N-acetyl-gamma-glutamyl-phosphate reductase (346 aa).

Cys-149 is an active-site residue.

Belongs to the NAGSA dehydrogenase family. Type 1 subfamily.

It localises to the cytoplasm. It carries out the reaction N-acetyl-L-glutamate 5-semialdehyde + phosphate + NADP(+) = N-acetyl-L-glutamyl 5-phosphate + NADPH + H(+). The protein operates within amino-acid biosynthesis; L-arginine biosynthesis; N(2)-acetyl-L-ornithine from L-glutamate: step 3/4. In terms of biological role, catalyzes the NADPH-dependent reduction of N-acetyl-5-glutamyl phosphate to yield N-acetyl-L-glutamate 5-semialdehyde. The chain is N-acetyl-gamma-glutamyl-phosphate reductase from Geotalea daltonii (strain DSM 22248 / JCM 15807 / FRC-32) (Geobacter daltonii).